The primary structure comprises 473 residues: Probable serine/threonine-protein kinase glkA (473 aa).

Positions 1–84 (MTIPTDNNSS…QSSSTATVNS (84 aa)) are disordered. Residues 7-84 (NNSSNNKGYN…QSSSTATVNS (78 aa)) are compositionally biased toward low complexity. The Protein kinase domain occupies 91 to 366 (YEIIKQVGQG…IDEIIAHPFL (276 aa)). ATP contacts are provided by residues 97 to 105 (VGQGTFGKV) and Lys-119. Asp-208 serves as the catalytic Proton acceptor. Disordered regions lie at residues 389–418 (GKSS…SNNK) and 437–473 (SSNL…TNTI). Residues 442–466 (SIDNSNNGKSSSSSNNIPSLNNSNN) are compositionally biased toward low complexity.

The protein belongs to the protein kinase superfamily. CMGC Ser/Thr protein kinase family. GSK-3 subfamily.

It carries out the reaction L-seryl-[tau protein] + ATP = O-phospho-L-seryl-[tau protein] + ADP + H(+). The enzyme catalyses L-threonyl-[tau protein] + ATP = O-phospho-L-threonyl-[tau protein] + ADP + H(+). The polypeptide is Probable serine/threonine-protein kinase glkA (glkA) (Dictyostelium discoideum (Social amoeba)).